The following is a 143-amino-acid chain: Zinc-containing ferredoxin (143 aa).

The interval 13 to 60 is N-terminal extension; that stretch reads PIDEHFLENDKDYPVTGQHNGHDVRAEGMQRLDADGKPYPTKLGIHGT. 3 residues coordinate Zn(2+): His31, His34, and His58. 4Fe-4S ferredoxin-type domains follow at residues 60–89 and 115–143; these read THVA…WNLN and KCDP…KITP. [3Fe-4S] cluster-binding residues include Cys69 and Cys75. Cys79 contributes to the [4Fe-4S] cluster binding site. A Zn(2+)-binding site is contributed by Asp117. The [4Fe-4S] cluster site is built by Cys124, Cys127, and Cys130. A [3Fe-4S] cluster-binding site is contributed by Cys134.

The cofactor is [3Fe-4S] cluster. It depends on [4Fe-4S] cluster as a cofactor. Zn(2+) is required as a cofactor.

Functionally, ferredoxins are iron-sulfur proteins that transfer electrons in a wide variety of metabolic reactions. This is Zinc-containing ferredoxin (zfx) from Thermoplasma acidophilum (strain ATCC 25905 / DSM 1728 / JCM 9062 / NBRC 15155 / AMRC-C165).